We begin with the raw amino-acid sequence, 408 residues long: Myb/SANT-like DNA-binding domain-containing protein 4 (408 aa).

The Myb-like domain occupies 4–77; it reads LKRKRKSNFS…EVKRRYLDWR (74 aa). A coiled-coil region spans residues 236-367; the sequence is HLLVTLEKQK…IEKERLQDAL (132 aa).

The sequence is that of Myb/SANT-like DNA-binding domain-containing protein 4 (msantd4) from Xenopus tropicalis (Western clawed frog).